Here is a 37-residue protein sequence, read N- to C-terminus: Large ribosomal subunit protein bL36 (37 aa).

The protein belongs to the bacterial ribosomal protein bL36 family.

The chain is Large ribosomal subunit protein bL36 from Halothermothrix orenii (strain H 168 / OCM 544 / DSM 9562).